The chain runs to 336 residues: Formimidoylglutamase (336 aa).

Residues H129, D160, H162, D164, D257, and D259 each contribute to the Mn(2+) site.

Belongs to the arginase family. Mn(2+) is required as a cofactor.

The catalysed reaction is N-formimidoyl-L-glutamate + H2O = formamide + L-glutamate. It participates in amino-acid degradation; L-histidine degradation into L-glutamate; L-glutamate from N-formimidoyl-L-glutamate (hydrolase route): step 1/1. In terms of biological role, catalyzes the conversion of N-formimidoyl-L-glutamate to L-glutamate and formamide. This chain is Formimidoylglutamase, found in Vibrio vulnificus (strain YJ016).